The following is a 1078-amino-acid chain: Nonribosomal peptide synthetase aneB (1078 aa).

Residues 20 to 417 are adenylation; it reads FQQNVLDRPD…HGRKDTQVKI (398 aa). The region spanning 559–635 is the Carrier domain; it reads MPTTPLERQM…TLCQHVSVRP (77 aa). S596 is modified (O-(pantetheine 4'-phosphoryl)serine). Positions 699 to 1013 are condensation; the sequence is NYTLRLDVKL…HEMGYYGPVT (315 aa).

Belongs to the NRP synthetase family.

The enzyme catalyses holo-[peptidyl-carrier protein] + L-proline + ATP = L-prolyl-[peptidyl-carrier protein] + AMP + diphosphate. The protein operates within secondary metabolite biosynthesis. Its function is as follows. Nonribosomal peptide synthetase; part of the gene cluster that mediates the biosynthesis of aculenes, a unique type of norsesquiterpenes that contain a nordaucane skeleton linked to an L-proline moiety and are of mixed biosynthetic origin. The pathway begins with the synthesis of dauca-4,7-diene by the terpene cyclase aneC using farnesyl pyrophosphate (FPP) as substrate. The cytochrome P450 monooxygenase aneF then performs the initial oxidation at C-12 of dauca-4,7-diene to yield asperaculane D. Asperaculane D is substrate of the cytochrome P450 monooxygenase aneD for C-10 hydroxylation to yield asperaculane E. The cytochrome P450 monooxygenase aneG then converts asperaculane E into aculene D via C-2 oxidation. The monomodular nonribosomal peptide synthase aneB adenylates L-proline and the thiohydrolase aneE transfers this activated L-proline derivative to aculenes D and C to produce respectively aculenes B and A. The dioxygenase aneA converts aculene D into aculene C, and aculene B into aculene A by introducing the 5,6-alkene moiety. Asperculanes A, B, C and F, as well as 14-prolyl asperculane C, might be shunt products of the pathway. The polypeptide is Nonribosomal peptide synthetase aneB (Aspergillus aculeatus (strain ATCC 16872 / CBS 172.66 / WB 5094)).